The primary structure comprises 173 residues: RNA silencing suppressor p19 (173 aa).

A compositionally biased stretch (basic and acidic residues) spans methionine 1–glycine 21. The disordered stretch occupies residues methionine 1–aspartate 34.

Belongs to the tombusvirus protein p19 family. Homodimer.

Its function is as follows. Viral suppressor of RNA silencing which binds specifically to silencing RNAs (siRNAs). Acts as a molecular caliper to specifically select siRNAs based on the length of the duplex region of the RNA. This chain is RNA silencing suppressor p19, found in Cucumis sativus (Cucumber).